The following is a 197-amino-acid chain: Phospholipid hydroperoxide glutathione peroxidase GPX4 (197 aa).

The residue at position 40 (serine 40) is a Phosphoserine. Residue selenocysteine 73 is part of the active site. Position 73 (selenocysteine 73) is a non-standard amino acid, selenocysteine.

It belongs to the glutathione peroxidase family. In terms of assembly, monomer. Has a tendency to form higher mass oligomers. Interacts with FUNDC1; this interaction promotes GPX4 recruitment into mitochondria through TOM/TIM complex where it is degraded by mitophagy. As to expression, widely expressed with the highest levels in testis, heart, cerebrum, ileum, stomach, liver, jejunum and epididymis. Expressed primarily in testis and sperm midpiece (at protein level). Expressed in brain (at protein level). Expressed in heart, liver and kidney (at protein level). Expressed in retina, especially in inner segments of photoreceptor cells (at protein level). In terms of tissue distribution, highly expressed during embryogenesis. Down-regulated between 14.5 dpc and 17.5 dpc. Highly expressed during embryogenesis. In contrast to isoform Mitochondrial and isoform Nuclear, which are down-regulated between 14.5 dpc and 17.5 dpc, remains constant. As to expression, mainly expressed in sperm. Weakly expressed during embryogenesis. Down-regulated between 14.5 dpc and 17.5 dpc.

It is found in the mitochondrion. The protein resides in the cytoplasm. Its subcellular location is the nucleus. The enzyme catalyses a hydroperoxy polyunsaturated fatty acid + 2 glutathione = a hydroxy polyunsaturated fatty acid + glutathione disulfide + H2O. It catalyses the reaction 2 glutathione + H2O2 = glutathione disulfide + 2 H2O. The catalysed reaction is tert-butyl hydroperoxide + 2 glutathione = tert-butanol + glutathione disulfide + H2O. It carries out the reaction cumene hydroperoxide + 2 glutathione = 2-phenylpropan-2-ol + glutathione disulfide + H2O. The enzyme catalyses (9S)-hydroperoxy-(10E,12Z)-octadecadienoate + 2 glutathione = (9S)-hydroxy-(10E,12Z)-octadecadienoate + glutathione disulfide + H2O. It catalyses the reaction (13S)-hydroperoxy-(9Z,11E)-octadecadienoate + 2 glutathione = (13S)-hydroxy-(9Z,11E)-octadecadienoate + glutathione disulfide + H2O. The catalysed reaction is (5S)-hydroperoxy-(6E,8Z,11Z,14Z)-eicosatetraenoate + 2 glutathione = (5S)-hydroxy-(6E,8Z,11Z,14Z)-eicosatetraenoate + glutathione disulfide + H2O. It carries out the reaction (12R)-hydroperoxy-(5Z,8Z,10E,14Z)-eicosatetraenoate + 2 glutathione = (12R)-hydroxy-(5Z,8Z,10E,14Z)-eicosatetraenoate + glutathione disulfide + H2O. The enzyme catalyses (12S)-hydroperoxy-(5Z,8Z,10E,14Z)-eicosatetraenoate + 2 glutathione = (12S)-hydroxy-(5Z,8Z,10E,14Z)-eicosatetraenoate + glutathione disulfide + H2O. It catalyses the reaction (15S)-hydroperoxy-(5Z,8Z,11Z,13E)-eicosatetraenoate + 2 glutathione = (15S)-hydroxy-(5Z,8Z,11Z,13E)-eicosatetraenoate + glutathione disulfide + H2O. The catalysed reaction is (5S)-hydroperoxy-(6E,8Z,11Z,14Z,17Z)-eicosapentaenoate + 2 glutathione = (5S)-hydroxy-(6E,8Z,11Z,14Z,17Z)-eicosapentaenoate + glutathione disulfide + H2O. It carries out the reaction (12S)-hydroperoxy-(5Z,8Z,10E,14Z,17Z)-eicosapentaenoate + 2 glutathione = (12S)-hydroxy-(5Z,8Z,10E,14Z,17Z)-eicosapentaenoate + glutathione disulfide + H2O. The enzyme catalyses (15S)-hydroperoxy-(5Z,8Z,11Z,13E,17Z)-eicosapentaenoate + 2 glutathione = (15S)-hydroxy-(5Z,8Z,11Z,13E,17Z)-eicosapentaenoate + glutathione disulfide + H2O. It catalyses the reaction (15S)-hydroperoxy-(11Z,13E)-eicosadienoate + 2 glutathione = (15S)-hydroxy-(11Z,13E)-eicosadienoate + glutathione disulfide + H2O. The catalysed reaction is (17S)-hydroperoxy-(4Z,7Z,10Z,13Z,15E,19Z)-docosahexaenoate + 2 glutathione = (17S)-hydroxy-(4Z,7Z,10Z,13Z,15E,19Z)-docosahexaenoate + glutathione disulfide + H2O. It carries out the reaction a hydroperoxy-1,2-diacyl-glycero-3-phosphocholine + 2 glutathione = a hydroxy-1,2-diacyl-glycero-3-phosphocholine + glutathione disulfide + H2O. In terms of biological role, essential antioxidant peroxidase that directly reduces phospholipid hydroperoxide even if they are incorporated in membranes and lipoproteins. Can also reduce fatty acid hydroperoxide, cholesterol hydroperoxide and thymine hydroperoxide. Plays a key role in protecting cells from oxidative damage by preventing membrane lipid peroxidation. Required to prevent cells from ferroptosis, a non-apoptotic cell death resulting from an iron-dependent accumulation of lipid reactive oxygen species. The presence of selenocysteine (Sec) versus Cys at the active site is essential for life: it provides resistance to overoxidation and prevents cells against ferroptosis. The presence of Sec at the active site is also essential for the survival of a specific type of parvalbumin-positive interneurons, thereby preventing against fatal epileptic seizures. May be required to protect cells from the toxicity of ingested lipid hydroperoxides. Required for normal sperm development and male fertility. Essential for maturation and survival of photoreceptor cells. Plays a role in a primary T-cell response to viral and parasitic infection by protecting T-cells from ferroptosis and by supporting T-cell expansion. Plays a role of glutathione peroxidase in platelets in the arachidonic acid metabolism. Reduces hydroperoxy ester lipids formed by a 15-lipoxygenase that may play a role as down-regulator of the cellular 15-lipoxygenase pathway. Can also reduce small soluble hydroperoxides such as H2O2 and tert-butyl hydroperoxide. Specifically able to suppress the production of leukotriene and prostaglandin in response to several stimuli by reducing fatty acid hydroperoxide. Functionally, specifically required to prevent mitochondrial cell death by mediating reduction of cardiolipin hydroperoxide. Also required for normal sperm development and male fertility. Its function is as follows. Required for male fertility by stabilizing the condensed chromatin in sperm nuclei. This is Phospholipid hydroperoxide glutathione peroxidase GPX4 from Mus musculus (Mouse).